We begin with the raw amino-acid sequence, 216 residues long: ATP-dependent Clp protease proteolytic subunit (216 aa).

The Nucleophile role is filled by Ser101. His126 is a catalytic residue.

The protein belongs to the peptidase S14 family. Component of the chloroplastic Clp protease core complex.

The protein localises to the plastid. Its subcellular location is the chloroplast stroma. It carries out the reaction Hydrolysis of proteins to small peptides in the presence of ATP and magnesium. alpha-casein is the usual test substrate. In the absence of ATP, only oligopeptides shorter than five residues are hydrolyzed (such as succinyl-Leu-Tyr-|-NHMec, and Leu-Tyr-Leu-|-Tyr-Trp, in which cleavage of the -Tyr-|-Leu- and -Tyr-|-Trp bonds also occurs).. In terms of biological role, cleaves peptides in various proteins in a process that requires ATP hydrolysis. Has a chymotrypsin-like activity. Plays a major role in the degradation of misfolded proteins. The sequence is that of ATP-dependent Clp protease proteolytic subunit from Hordeum vulgare (Barley).